A 428-amino-acid chain; its full sequence is Dual-specificity RNA methyltransferase RlmN (428 aa).

The span at M1 to G17 shows a compositional bias: basic and acidic residues. Residues M1–N44 are disordered. Positions K18–T33 are enriched in polar residues. Catalysis depends on E136, which acts as the Proton acceptor. One can recognise a Radical SAM core domain in the interval E142–D381. A disulfide bond links C149 and C386. Positions 156, 160, and 163 each coordinate [4Fe-4S] cluster. S-adenosyl-L-methionine-binding positions include G212–E213, S244, S266–H268, and N343. The S-methylcysteine intermediate role is filled by C386.

The protein belongs to the radical SAM superfamily. RlmN family. [4Fe-4S] cluster is required as a cofactor.

It localises to the cytoplasm. The catalysed reaction is adenosine(2503) in 23S rRNA + 2 reduced [2Fe-2S]-[ferredoxin] + 2 S-adenosyl-L-methionine = 2-methyladenosine(2503) in 23S rRNA + 5'-deoxyadenosine + L-methionine + 2 oxidized [2Fe-2S]-[ferredoxin] + S-adenosyl-L-homocysteine. It catalyses the reaction adenosine(37) in tRNA + 2 reduced [2Fe-2S]-[ferredoxin] + 2 S-adenosyl-L-methionine = 2-methyladenosine(37) in tRNA + 5'-deoxyadenosine + L-methionine + 2 oxidized [2Fe-2S]-[ferredoxin] + S-adenosyl-L-homocysteine. Its function is as follows. Specifically methylates position 2 of adenine 2503 in 23S rRNA and position 2 of adenine 37 in tRNAs. m2A2503 modification seems to play a crucial role in the proofreading step occurring at the peptidyl transferase center and thus would serve to optimize ribosomal fidelity. This is Dual-specificity RNA methyltransferase RlmN from Rhodospirillum rubrum (strain ATCC 11170 / ATH 1.1.1 / DSM 467 / LMG 4362 / NCIMB 8255 / S1).